The primary structure comprises 180 residues: Hypoxanthine-guanine phosphoribosyltransferase (180 aa).

Diphosphate is bound by residues lysine 43 and glycine 44. Positions 99 and 100 each coordinate Mg(2+). The active-site Proton acceptor is aspartate 103. Residues lysine 131, 152-153 (FI), and aspartate 159 contribute to the GMP site. Residue arginine 165 coordinates diphosphate.

The protein belongs to the purine/pyrimidine phosphoribosyltransferase family. Mg(2+) serves as cofactor.

It localises to the cytoplasm. The catalysed reaction is IMP + diphosphate = hypoxanthine + 5-phospho-alpha-D-ribose 1-diphosphate. It catalyses the reaction GMP + diphosphate = guanine + 5-phospho-alpha-D-ribose 1-diphosphate. It functions in the pathway purine metabolism; IMP biosynthesis via salvage pathway; IMP from hypoxanthine: step 1/1. Its pathway is purine metabolism; GMP biosynthesis via salvage pathway; GMP from guanine: step 1/1. Its function is as follows. Purine salvage pathway enzyme that catalyzes the transfer of the ribosyl-5-phosphate group from 5-phospho-alpha-D-ribose 1-diphosphate (PRPP) to the N9 position of the 6-oxopurines hypoxanthine and guanine to form the corresponding ribonucleotides IMP (inosine 5'-monophosphate) and GMP (guanosine 5'-monophosphate), with the release of PPi. This Streptococcus agalactiae serotype III (strain NEM316) protein is Hypoxanthine-guanine phosphoribosyltransferase (hpt).